Here is a 695-residue protein sequence, read N- to C-terminus: Follicle-stimulating hormone receptor (695 aa).

Positions 1-17 (MSLLLVSLLAFLTLGSG) are cleaved as a signal peptide. 2 disulfide bridges follow: Cys-18-Cys-25 and Cys-23-Cys-32. The LRRNT domain maps to 18 to 46 (CHHRICHCSNGVFLCQESKVTEIPPDLPR). At 18 to 366 (CHHRICHCSN…EDIMGHDILR (349 aa)) the chain is on the extracellular side. 9 LRR repeats span residues 49–72 (VELR…FGDL), 73–97 (EKIE…LPKL), 98–118 (HEIR…AFQN), 119–143 (LPNL…KIQS), 144–169 (LQKV…VGLS), 170–192 (FESM…AFNG), 193–216 (TQLD…VFQG), 217–240 (ASGP…GLEN), and 241–259 (LKKL…PSLE). Residues Asn-191 and Asn-199 are each glycosylated (N-linked (GlcNAc...) asparagine). 4 disulfide bridges follow: Cys-275/Cys-346, Cys-276/Cys-292, Cys-276/Cys-356, and Cys-292/Cys-338. An N-linked (GlcNAc...) asparagine glycan is attached at Asn-293. Tyr-335 is subject to Sulfotyrosine. The helical transmembrane segment at 367–387 (VLIWFISILAITGNIIVLVIL) threads the bilayer. Residues 388 to 398 (ITSQYKLTVPR) are Cytoplasmic-facing. Residues 399 to 421 (FLMCNLAFADLCIGIYLLLIASV) form a helical membrane-spanning segment. Over 422–443 (DIHTKTQYHNYAIDWQTGAGCD) the chain is Extracellular. Cys-442 and Cys-517 form a disulfide bridge. The chain crosses the membrane as a helical span at residues 444-465 (AAGFFTVFASELSVYTLTAITL). At 466–485 (ERWHTITHAMQLQCKVQLRH) the chain is on the cytoplasmic side. The helical transmembrane segment at 486-508 (AASIMLVGWIFAFTVALFPIFGI) threads the bilayer. The Extracellular portion of the chain corresponds to 509 to 528 (SSYMKVSICLPMDIDSPLSQ). The helical transmembrane segment at 529-550 (LYVVSLLVLNVLAFVVICGCYT) threads the bilayer. Over 551 to 573 (HIYLTVRNPNIMSSSSDTKIAKR) the chain is Cytoplasmic. A helical transmembrane segment spans residues 574–597 (MAMLIFTDFLCMAPISFFAISASL). The Extracellular segment spans residues 598 to 608 (KVPLITVSKSK). The helical transmembrane segment at 609 to 630 (ILLVLFYPINSCANPFLYAIFT) threads the bilayer. Residues 631–695 (KNFRRDVFIL…LIPLSRLAQN (65 aa)) lie on the Cytoplasmic side of the membrane.

It belongs to the G-protein coupled receptor 1 family. FSH/LSH/TSH subfamily. As to quaternary structure, homotrimer. Functions as a homotrimer binding the FSH hormone heterodimer composed of CGA and FSHB. Interacts with ARRB2. Interacts with APPL2; interaction is independent of follicle stimulating hormone stimulation. In terms of processing, N-glycosylated; indirectly required for FSH-binding, possibly via a conformational change that allows high affinity binding of hormone. Post-translationally, sulfated.

The protein localises to the cell membrane. Its function is as follows. G protein-coupled receptor for follitropin, the follicle-stimulating hormone. Through cAMP production activates the downstream PI3K-AKT and ERK1/ERK2 signaling pathways. The protein is Follicle-stimulating hormone receptor (FSHR) of Sus scrofa (Pig).